The primary structure comprises 514 residues: Type-2 serine--tRNA ligase (514 aa).

L-serine is bound at residue alanine 313. Cysteine 315 contributes to the Zn(2+) binding site. Arginine 344 is an L-serine binding site. ATP-binding positions include 344–346 (RWE) and 355–356 (RV). L-serine is bound at residue 361–363 (RGE). 2 residues coordinate Zn(2+): glutamate 363 and cysteine 470. Position 477 (arginine 477) interacts with ATP.

Belongs to the class-II aminoacyl-tRNA synthetase family. Type-2 seryl-tRNA synthetase subfamily. As to quaternary structure, homodimer. Zn(2+) is required as a cofactor.

The protein localises to the cytoplasm. The catalysed reaction is tRNA(Ser) + L-serine + ATP = L-seryl-tRNA(Ser) + AMP + diphosphate + H(+). The enzyme catalyses tRNA(Sec) + L-serine + ATP = L-seryl-tRNA(Sec) + AMP + diphosphate + H(+). The protein operates within aminoacyl-tRNA biosynthesis; selenocysteinyl-tRNA(Sec) biosynthesis; L-seryl-tRNA(Sec) from L-serine and tRNA(Sec): step 1/1. Catalyzes the attachment of serine to tRNA(Ser). Is also able to aminoacylate tRNA(Sec) with serine, to form the misacylated tRNA L-seryl-tRNA(Sec), which will be further converted into selenocysteinyl-tRNA(Sec). This Methanococcus maripaludis (strain C7 / ATCC BAA-1331) protein is Type-2 serine--tRNA ligase.